The sequence spans 491 residues: Protein nucleotidyltransferase YdiU (491 aa).

ATP contacts are provided by glycine 94, glycine 96, arginine 97, lysine 117, aspartate 129, glycine 130, arginine 180, and arginine 187. Catalysis depends on aspartate 256, which acts as the Proton acceptor. Mg(2+) is bound by residues asparagine 257 and aspartate 266. Aspartate 266 is an ATP binding site.

It belongs to the SELO family. Mg(2+) is required as a cofactor. Mn(2+) serves as cofactor.

The catalysed reaction is L-seryl-[protein] + ATP = 3-O-(5'-adenylyl)-L-seryl-[protein] + diphosphate. It carries out the reaction L-threonyl-[protein] + ATP = 3-O-(5'-adenylyl)-L-threonyl-[protein] + diphosphate. It catalyses the reaction L-tyrosyl-[protein] + ATP = O-(5'-adenylyl)-L-tyrosyl-[protein] + diphosphate. The enzyme catalyses L-histidyl-[protein] + UTP = N(tele)-(5'-uridylyl)-L-histidyl-[protein] + diphosphate. The catalysed reaction is L-seryl-[protein] + UTP = O-(5'-uridylyl)-L-seryl-[protein] + diphosphate. It carries out the reaction L-tyrosyl-[protein] + UTP = O-(5'-uridylyl)-L-tyrosyl-[protein] + diphosphate. Functionally, nucleotidyltransferase involved in the post-translational modification of proteins. It can catalyze the addition of adenosine monophosphate (AMP) or uridine monophosphate (UMP) to a protein, resulting in modifications known as AMPylation and UMPylation. The sequence is that of Protein nucleotidyltransferase YdiU from Alkaliphilus metalliredigens (strain QYMF).